The chain runs to 138 residues: uncharacterized protein (138 aa).

35–42 contacts ATP; it reads DFIGSFYN.

This is an uncharacterized protein from Acanthamoeba polyphaga mimivirus (APMV).